Consider the following 156-residue polypeptide: Ribosome maturation factor RimP (156 aa).

Belongs to the RimP family.

The protein localises to the cytoplasm. Its function is as follows. Required for maturation of 30S ribosomal subunits. The chain is Ribosome maturation factor RimP from Anoxybacillus flavithermus (strain DSM 21510 / WK1).